Consider the following 387-residue polypeptide: Testis-expressed protein 9 (387 aa).

Disordered stretches follow at residues 1–25 and 58–133; these read MAGRSVRVPRRGSAGTQSRGQLAAG and REQQ…LKYP. Composition is skewed to polar residues over residues 70-91 and 103-115; these read ALTTSCKEEGGSSSRDLLSSEG and KNTGPVNKIQNRL. Positions 184 to 347 form a coiled coil; sequence IGTEAQIRFL…ERQKGELMIG (164 aa).

As to expression, testis-specific.

Its subcellular location is the cytoplasm. The protein localises to the cytoskeleton. It is found in the microtubule organizing center. The protein resides in the centrosome. It localises to the centriolar satellite. The sequence is that of Testis-expressed protein 9 (Tex9) from Mus musculus (Mouse).